The sequence spans 215 residues: Phosphoribosylglycinamide formyltransferase (215 aa).

(6R)-10-formyltetrahydrofolate is bound by residues R74, 99-102, and N116; that span reads MRIL. The Proton donor role is filled by H118.

Belongs to the GART family.

The enzyme catalyses N(1)-(5-phospho-beta-D-ribosyl)glycinamide + (6R)-10-formyltetrahydrofolate = N(2)-formyl-N(1)-(5-phospho-beta-D-ribosyl)glycinamide + (6S)-5,6,7,8-tetrahydrofolate + H(+). It participates in purine metabolism; IMP biosynthesis via de novo pathway; N(2)-formyl-N(1)-(5-phospho-D-ribosyl)glycinamide from N(1)-(5-phospho-D-ribosyl)glycinamide (10-formyl THF route): step 1/1. In terms of biological role, catalyzes the transfer of a formyl group from 10-formyltetrahydrofolate to 5-phospho-ribosyl-glycinamide (GAR), producing 5-phospho-ribosyl-N-formylglycinamide (FGAR) and tetrahydrofolate. This is Phosphoribosylglycinamide formyltransferase from Mycobacterium tuberculosis (strain CDC 1551 / Oshkosh).